The chain runs to 157 residues: ATP synthase subunit b (157 aa).

Residues 7 to 27 (LIAQLVVFFILAWVTMKFVWP) traverse the membrane as a helical segment.

The protein belongs to the ATPase B chain family. In terms of assembly, F-type ATPases have 2 components, F(1) - the catalytic core - and F(0) - the membrane proton channel. F(1) has five subunits: alpha(3), beta(3), gamma(1), delta(1), epsilon(1). F(0) has three main subunits: a(1), b(2) and c(10-14). The alpha and beta chains form an alternating ring which encloses part of the gamma chain. F(1) is attached to F(0) by a central stalk formed by the gamma and epsilon chains, while a peripheral stalk is formed by the delta and b chains.

The protein resides in the cell inner membrane. F(1)F(0) ATP synthase produces ATP from ADP in the presence of a proton or sodium gradient. F-type ATPases consist of two structural domains, F(1) containing the extramembraneous catalytic core and F(0) containing the membrane proton channel, linked together by a central stalk and a peripheral stalk. During catalysis, ATP synthesis in the catalytic domain of F(1) is coupled via a rotary mechanism of the central stalk subunits to proton translocation. Functionally, component of the F(0) channel, it forms part of the peripheral stalk, linking F(1) to F(0). This chain is ATP synthase subunit b, found in Aromatoleum aromaticum (strain DSM 19018 / LMG 30748 / EbN1) (Azoarcus sp. (strain EbN1)).